A 322-amino-acid polypeptide reads, in one-letter code: Ferric-anguibactin-binding protein FatB (322 aa).

The N-terminal stretch at 1–22 (MFKSTLNIAVAIVCSSLVTLTG) is a signal peptide. Residue Cys-23 is the site of N-palmitoyl cysteine attachment. A lipid anchor (S-diacylglycerol cysteine) is attached at Cys-23. The Fe/B12 periplasmic-binding domain maps to 57-322 (RVAALDMNEV…IDDIIKGYQS (266 aa)).

It belongs to the bacterial solute-binding protein 8 family. Part of an iron transport system composed of the outer membrane receptor FatA, the periplasmic binding protein FatB and the inner membrane proteins FatC and FatD.

It localises to the cell inner membrane. Its function is as follows. Involved in the uptake of iron in complex with the siderophore anguibactin. Binds ferric-anguibactin in the periplasm and mediates its transport into the cytoplasm. This Vibrio anguillarum (strain ATCC 68554 / 775) (Listonella anguillarum) protein is Ferric-anguibactin-binding protein FatB.